The following is a 327-amino-acid chain: Germination protease (327 aa).

Positions 1–7 are excised as a propeptide; that stretch reads MNSVRTD.

The protein belongs to the peptidase A25 family. As to quaternary structure, homotetramer. In terms of processing, autoproteolytically processed. The inactive tetrameric zymogen termed p46 autoprocesses to a smaller form termed p41, which is active only during spore germination.

It catalyses the reaction Endopeptidase action with P4 Glu or Asp, P1 preferably Glu &gt; Asp, P1' hydrophobic and P2' Ala.. Functionally, initiates the rapid degradation of small, acid-soluble proteins during spore germination. This is Germination protease from Clostridium acetobutylicum (strain ATCC 824 / DSM 792 / JCM 1419 / IAM 19013 / LMG 5710 / NBRC 13948 / NRRL B-527 / VKM B-1787 / 2291 / W).